The chain runs to 77 residues: Anionic peptide 17.1 (77 aa).

The first 24 residues, 1 to 24 (MASKTVLVLLLVSVLVSTFCTAKA), serve as a signal peptide directing secretion.

Belongs to the non-disulfide-bridged peptide (NDBP) superfamily. Long chain multifunctional peptide (group 2) family. In terms of tissue distribution, expressed by the venom gland.

The protein resides in the secreted. The polypeptide is Anionic peptide 17.1 (Lychas mucronatus (Chinese swimming scorpion)).